An 811-amino-acid chain; its full sequence is Phenylalanine--tRNA ligase beta subunit (811 aa).

In terms of domain architecture, tRNA-binding spans 40-156 (AEKNENIVVG…EDIEVGSKVD (117 aa)). In terms of domain architecture, B5 spans 411–486 (KSTKEVKVPL…RIHGYDHLPY (76 aa)). Mg(2+) is bound by residues Asp-464, Asp-470, Glu-473, and Glu-474. In terms of domain architecture, FDX-ACB spans 717–810 (PRYPSVSRDI…VNKKFGSYVR (94 aa)).

Belongs to the phenylalanyl-tRNA synthetase beta subunit family. Type 1 subfamily. Tetramer of two alpha and two beta subunits. Mg(2+) serves as cofactor.

The protein localises to the cytoplasm. It catalyses the reaction tRNA(Phe) + L-phenylalanine + ATP = L-phenylalanyl-tRNA(Phe) + AMP + diphosphate + H(+). This is Phenylalanine--tRNA ligase beta subunit from Oceanobacillus iheyensis (strain DSM 14371 / CIP 107618 / JCM 11309 / KCTC 3954 / HTE831).